A 120-amino-acid polypeptide reads, in one-letter code: Large ribosomal subunit protein uL18 (120 aa).

It belongs to the universal ribosomal protein uL18 family. In terms of assembly, part of the 50S ribosomal subunit; part of the 5S rRNA/L5/L18/L25 subcomplex. Contacts the 5S and 23S rRNAs.

Its function is as follows. This is one of the proteins that bind and probably mediate the attachment of the 5S RNA into the large ribosomal subunit, where it forms part of the central protuberance. The polypeptide is Large ribosomal subunit protein uL18 (Brucella anthropi (strain ATCC 49188 / DSM 6882 / CCUG 24695 / JCM 21032 / LMG 3331 / NBRC 15819 / NCTC 12168 / Alc 37) (Ochrobactrum anthropi)).